The following is a 554-amino-acid chain: 2-succinyl-5-enolpyruvyl-6-hydroxy-3-cyclohexene-1-carboxylate synthase (554 aa).

This sequence belongs to the TPP enzyme family. MenD subfamily. As to quaternary structure, homodimer. Requires Mg(2+) as cofactor. Mn(2+) is required as a cofactor. The cofactor is thiamine diphosphate.

The catalysed reaction is isochorismate + 2-oxoglutarate + H(+) = 5-enolpyruvoyl-6-hydroxy-2-succinyl-cyclohex-3-ene-1-carboxylate + CO2. The protein operates within quinol/quinone metabolism; 1,4-dihydroxy-2-naphthoate biosynthesis; 1,4-dihydroxy-2-naphthoate from chorismate: step 2/7. Its pathway is quinol/quinone metabolism; menaquinone biosynthesis. Catalyzes the thiamine diphosphate-dependent decarboxylation of 2-oxoglutarate and the subsequent addition of the resulting succinic semialdehyde-thiamine pyrophosphate anion to isochorismate to yield 2-succinyl-5-enolpyruvyl-6-hydroxy-3-cyclohexene-1-carboxylate (SEPHCHC). In Renibacterium salmoninarum (strain ATCC 33209 / DSM 20767 / JCM 11484 / NBRC 15589 / NCIMB 2235), this protein is 2-succinyl-5-enolpyruvyl-6-hydroxy-3-cyclohexene-1-carboxylate synthase.